The chain runs to 395 residues: Renin (395 aa).

The first 21 residues, 1 to 21 (MLQSWEFVLLISCFLCFSSDA), serve as a signal peptide directing secretion. Positions 22–43 (LQRISLKKMPSIRETLQEMGMK) are cleaved as a propeptide — activation peptide. N-linked (GlcNAc...) asparagine glycosylation occurs at asparagine 64. The region spanning 79-392 (YYGEISIGTP…DRQNNRIGFA (314 aa)) is the Peptidase A1 domain. Aspartate 97 is an active-site residue. Intrachain disulfides connect cysteine 110-cysteine 117 and cysteine 274-cysteine 278. Residue aspartate 283 is part of the active site. An intrachain disulfide couples cysteine 316 to cysteine 351.

The protein belongs to the peptidase A1 family. In terms of processing, N-glycosylated. Expressed by the venom gland (at protein level).

The protein resides in the secreted. The catalysed reaction is Cleavage of Leu-|-Xaa bond in angiotensinogen to generate angiotensin I.. With respect to regulation, inhibited completely by aspartyl protease inhibitor pepstatin A, but not by the serine- or metalloproteinase inhibitors PMSF or EDTA. Its function is as follows. Renin is a highly specific endopeptidase, whose only known function is to generate angiotensin I from angiotensinogen in the plasma, initiating a cascade of reactions that produce an elevation of blood pressure and increased sodium retention by the kidney. This protein is also found in snake venom and shown to specifically cleave human and porcine angiotensinogen into angiotensin I. It does not have general protease activity, no cleavage of alpha or beta casein. May be directly responsible for elevation of blood pressure in the victims of envenomation. This is Renin from Echis ocellatus (Ocellated saw-scaled viper).